A 776-amino-acid polypeptide reads, in one-letter code: MQSRLVSQSGLGRRWAVLRCALSKTYQRRTLTSTRRQFQDVFQSQLEDPTSAALFSALNSSKAVPQTLTEKIVQKYSVGLPQGKFVKSGDYVTIQPHRCMTHDNSWPCALKFMSIGASRLHNPDQIVMTLDHDVQNKSDKNLKKYRQIEEFATQHGVEFYPAGRGIGHQIMIEEGFAWPGTLAVASDSHSNMYGGVGCLGTPIVRTDAASVWATGKTWWQIPPVAKVTFKGVLPPGVTGKDVIVALCGLFNKDDVLNHAIEFTGSEETMRSLSVDTRLTIANMTTEWGALSGLFPIDSVLKGWLRGKATTAAMGLADGPFKTRAAERFTHPLLEQLFENPLTADKGAKYAKELFLDLSSLSPYVSGPNSVKVATPLKELEAQNIKVDKAYLVSCTNSRASDIAAAAKVFKEAAEKNGGKIPKIADGVKFYIAAASIPEQLAAEGNGDWQTLLEAGATQLPAGCGPCIGMGQGLLEPGEVGISASNRNFKGRMGSTEAKAYLGSPEVVAASALSGKLSGPGWYQTPEGWTEVIRGEGDGIREEDRMLTNEEALEKIIGQLDDLVADGEKRFASETPAVEESEQGLTEIYPGFPERVSGELVFCDADNVNTDGIYPGKYTYQDDVPPETMARVCMENYDPEFSTTAKEGDILVSGFNFGCGSSREQAATAILAKKIPLVVSGSFGNIFSRNSINNALMGLEVPRLVNRLRETFGSGDKVLTRRTGWTLTWDVRKSQIEVQEGPGGPKWTHKVGELPPNVQEIIAKGGLEKWVKNAIGA.

A mitochondrion-targeting transit peptide spans 1–38; it reads MQSRLVSQSGLGRRWAVLRCALSKTYQRRTLTSTRRQF. C394, C463, and C466 together coordinate [4Fe-4S] cluster.

The protein belongs to the aconitase/IPM isomerase family. [4Fe-4S] cluster serves as cofactor.

The protein resides in the mitochondrion. It catalyses the reaction (2R,3S)-homoisocitrate = cis-homoaconitate + H2O. The protein operates within amino-acid biosynthesis; L-lysine biosynthesis via AAA pathway; L-alpha-aminoadipate from 2-oxoglutarate: step 3/5. Catalyzes the reversible hydration of cis-homoaconitate to (2R,3S)-homoisocitrate, a step in the alpha-aminoadipate pathway for lysine biosynthesis. This chain is Homoaconitase, mitochondrial (lys4), found in Emericella nidulans (strain FGSC A4 / ATCC 38163 / CBS 112.46 / NRRL 194 / M139) (Aspergillus nidulans).